A 169-amino-acid polypeptide reads, in one-letter code: MNVDFIAGINNLGEKIYTCEPFKTSFQNPFIVALIITAVVLVVFFAICNPPVDKKRKTKTAIYVYICIVALLFLHYYVLNHQLNDIYNKSNMDVIVSSIHDKYKGGDEIIPPISPPSVSNELEEDQPKKIPAGPKPAGPKPADSKPASSADSKPLVPLQEVIMPSQYNN.

2 helical membrane passes run 28 to 48 and 60 to 80; these read NPFI…FAIC and TAIY…YVLN. The N-linked (GlcNAc...) asparagine; by host glycan is linked to Asn-88. Positions 107-169 are disordered; it reads DEIIPPISPP…EVIMPSQYNN (63 aa). Low complexity predominate over residues 140–154; that stretch reads KPADSKPASSADSKP.

The protein belongs to the asfivirus B169L family.

The protein resides in the host membrane. It is found in the virion. The chain is Transmembrane protein B169L from Ornithodoros (relapsing fever ticks).